The primary structure comprises 121 residues: Protein TusC (121 aa).

The protein belongs to the DsrF/TusC family. As to quaternary structure, heterohexamer, formed by a dimer of trimers. The hexameric TusBCD complex contains 2 copies each of TusB, TusC and TusD. The TusBCD complex interacts with TusE.

It localises to the cytoplasm. Part of a sulfur-relay system required for 2-thiolation of 5-methylaminomethyl-2-thiouridine (mnm(5)s(2)U) at tRNA wobble positions. The chain is Protein TusC from Yersinia enterocolitica serotype O:8 / biotype 1B (strain NCTC 13174 / 8081).